The chain runs to 215 residues: uncharacterized protein (215 aa).

The next 6 helical transmembrane spans lie at 21–40 (IIKYLVIFFLFCIISTVLIN), 50–69 (LIFSVICLLISLIGFSSVIF), 95–117 (FFAIFISSTIGLVFVLPIIYVLF), 122–144 (LEIIFFFSSVWMILVLSSSLVVL), 156–178 (ANFVGTFIMPLLIPNIIMTGLIL), and 183–205 (LQLIFIMIGINLVFLPISFFLSS).

It belongs to the CcmB/CycW/HelB family.

It is found in the cell membrane. This is an uncharacterized protein from Rickettsia conorii (strain ATCC VR-613 / Malish 7).